A 251-amino-acid chain; its full sequence is Hydroxyacylglutathione hydrolase (251 aa).

Zn(2+) is bound by residues H53, H55, D57, H58, H110, D127, and H165.

It belongs to the metallo-beta-lactamase superfamily. Glyoxalase II family. Monomer. Zn(2+) is required as a cofactor.

It catalyses the reaction an S-(2-hydroxyacyl)glutathione + H2O = a 2-hydroxy carboxylate + glutathione + H(+). The protein operates within secondary metabolite metabolism; methylglyoxal degradation; (R)-lactate from methylglyoxal: step 2/2. In terms of biological role, thiolesterase that catalyzes the hydrolysis of S-D-lactoyl-glutathione to form glutathione and D-lactic acid. The polypeptide is Hydroxyacylglutathione hydrolase (Escherichia coli (strain ATCC 8739 / DSM 1576 / NBRC 3972 / NCIMB 8545 / WDCM 00012 / Crooks)).